The chain runs to 399 residues: Dual-specificity RNA methyltransferase RlmN (399 aa).

The active-site Proton acceptor is Glu121. The Radical SAM core domain occupies 127 to 376 (DVDRGTLCVS…VRTPRGRDIL (250 aa)). A disulfide bridge links Cys134 with Cys379. Cys141, Cys145, and Cys148 together coordinate [4Fe-4S] cluster. Residues 205 to 206 (GE), Ser237, 259 to 261 (SLH), and Asn336 contribute to the S-adenosyl-L-methionine site. Cys379 serves as the catalytic S-methylcysteine intermediate.

Belongs to the radical SAM superfamily. RlmN family. Requires [4Fe-4S] cluster as cofactor.

The protein resides in the cytoplasm. The enzyme catalyses adenosine(2503) in 23S rRNA + 2 reduced [2Fe-2S]-[ferredoxin] + 2 S-adenosyl-L-methionine = 2-methyladenosine(2503) in 23S rRNA + 5'-deoxyadenosine + L-methionine + 2 oxidized [2Fe-2S]-[ferredoxin] + S-adenosyl-L-homocysteine. It catalyses the reaction adenosine(37) in tRNA + 2 reduced [2Fe-2S]-[ferredoxin] + 2 S-adenosyl-L-methionine = 2-methyladenosine(37) in tRNA + 5'-deoxyadenosine + L-methionine + 2 oxidized [2Fe-2S]-[ferredoxin] + S-adenosyl-L-homocysteine. Specifically methylates position 2 of adenine 2503 in 23S rRNA and position 2 of adenine 37 in tRNAs. m2A2503 modification seems to play a crucial role in the proofreading step occurring at the peptidyl transferase center and thus would serve to optimize ribosomal fidelity. The sequence is that of Dual-specificity RNA methyltransferase RlmN from Methylocella silvestris (strain DSM 15510 / CIP 108128 / LMG 27833 / NCIMB 13906 / BL2).